Reading from the N-terminus, the 540-residue chain is MFSIFKKKTSVQGTDSEIDEKITVKAKDKVVVSTEDEEVTTIVSSTKSTQVTNDSPWQDPTYFSSFGKELMFIATCMLAQLLNQAGQTHALCIMNVLSKSFNSEANNQAWLMASFPLAAGSFILISGRLGDIYGLKKMLIVGYVIVIVWSIISGLSKYSNSDAFFITSRAFQGVGIAFILPNIMGLVGHVYKVGSFRKNIVISFIGACAPTGGMFGGLFGGLIVTEDPNQWPWVFYAFGIATFLSLLMAWYSIPNNVPTNIHGLSMDWTGSALAIIGLILFNFVWNQAPIVGWDKPYIIVLLIISVIFLVAFFVYESKYAEVPLLPRAMTKNRHMIMILLAVFLGWGSFGIWTFYYVSFQLNLRHYSPVWTGGTYFVFVIFGSMAAFFVAFSIKRLGPALLLCFSLMAFDAGSIMFSVLPVEQSYWKLNFAMQAILCFGMDLSFPASSIILSDGLPMQYQGMAGSLVNTVINYSASLCLGMGGTVEHQINKSGNDLLKGYRAAVYLGVGLASLGVVISVTYMLENLWNRHRKSEDRSLEA.

The Cytoplasmic segment spans residues 1–61 (MFSIFKKKTS…TNDSPWQDPT (61 aa)). Residues 62–82 (YFSSFGKELMFIATCMLAQLL) traverse the membrane as a helical segment. Residues 83 to 108 (NQAGQTHALCIMNVLSKSFNSEANNQ) are Extracellular-facing. Residues 109–129 (AWLMASFPLAAGSFILISGRL) form a helical membrane-spanning segment. Topologically, residues 130–131 (GD) are cytoplasmic. Residues 132–152 (IYGLKKMLIVGYVIVIVWSII) form a helical membrane-spanning segment. Topologically, residues 153 to 169 (SGLSKYSNSDAFFITSR) are extracellular. A helical membrane pass occupies residues 170-190 (AFQGVGIAFILPNIMGLVGHV). The Cytoplasmic portion of the chain corresponds to 191–203 (YKVGSFRKNIVIS). A helical transmembrane segment spans residues 204–224 (FIGACAPTGGMFGGLFGGLIV). At 225–232 (TEDPNQWP) the chain is on the extracellular side. The chain crosses the membrane as a helical span at residues 233–253 (WVFYAFGIATFLSLLMAWYSI). Topologically, residues 254–272 (PNNVPTNIHGLSMDWTGSA) are cytoplasmic. Residues 273-293 (LAIIGLILFNFVWNQAPIVGW) form a helical membrane-spanning segment. Over 294-295 (DK) the chain is Extracellular. Residues 296–316 (PYIIVLLIISVIFLVAFFVYE) traverse the membrane as a helical segment. The Cytoplasmic segment spans residues 317 to 334 (SKYAEVPLLPRAMTKNRH). A helical membrane pass occupies residues 335-355 (MIMILLAVFLGWGSFGIWTFY). Residues 356–372 (YVSFQLNLRHYSPVWTG) lie on the Extracellular side of the membrane. The helical transmembrane segment at 373–393 (GTYFVFVIFGSMAAFFVAFSI) threads the bilayer. At 394–398 (KRLGP) the chain is on the cytoplasmic side. Residues 399-419 (ALLLCFSLMAFDAGSIMFSVL) form a helical membrane-spanning segment. The Extracellular segment spans residues 420 to 429 (PVEQSYWKLN). Residues 430-450 (FAMQAILCFGMDLSFPASSII) traverse the membrane as a helical segment. The Cytoplasmic portion of the chain corresponds to 451–461 (LSDGLPMQYQG). A helical transmembrane segment spans residues 462-482 (MAGSLVNTVINYSASLCLGMG). At 483–502 (GTVEHQINKSGNDLLKGYRA) the chain is on the extracellular side. Residues 503–523 (AVYLGVGLASLGVVISVTYML) form a helical membrane-spanning segment. Over 524–540 (ENLWNRHRKSEDRSLEA) the chain is Cytoplasmic.

This sequence belongs to the major facilitator superfamily.

It is found in the membrane. This is an uncharacterized protein from Saccharomyces cerevisiae (strain ATCC 204508 / S288c) (Baker's yeast).